A 63-amino-acid chain; its full sequence is Sec-independent protein translocase protein TatA (63 aa).

Residues 1 to 21 (MGSFSMWHWLIVLVIVLLLFG) form a helical membrane-spanning segment. The tract at residues 42-63 (GMTDEDAPDTAKTVDHKADETK) is disordered. Residues 53–63 (KTVDHKADETK) are compositionally biased toward basic and acidic residues.

It belongs to the TatA/E family. As to quaternary structure, the Tat system comprises two distinct complexes: a TatABC complex, containing multiple copies of TatA, TatB and TatC subunits, and a separate TatA complex, containing only TatA subunits. Substrates initially bind to the TatABC complex, which probably triggers association of the separate TatA complex to form the active translocon.

It is found in the cell inner membrane. Part of the twin-arginine translocation (Tat) system that transports large folded proteins containing a characteristic twin-arginine motif in their signal peptide across membranes. TatA could form the protein-conducting channel of the Tat system. This is Sec-independent protein translocase protein TatA from Rhizobium leguminosarum bv. trifolii (strain WSM2304).